Consider the following 143-residue polypeptide: Myocilin opposite strand protein (143 aa).

The tract at residues 65–111 (MATRDETITKKSGEGEEMLPSMGMDHESPSKAHLMVPPAPPPSPADA) is disordered. Residues 66–78 (ATRDETITKKSGE) are compositionally biased toward basic and acidic residues.

This Mus musculus (Mouse) protein is Myocilin opposite strand protein.